The sequence spans 514 residues: Exoglucanase 1 (514 aa).

The N-terminal stretch at 1–17 is a signal peptide; it reads MYQKLALISAFLATARA. The tract at residues 18-453 is catalytic; that stretch reads QSACTLQAET…GSTGNSSGGN (436 aa). 10 cysteine pairs are disulfide-bonded: Cys-21-Cys-89, Cys-36-Cys-42, Cys-67-Cys-88, Cys-78-Cys-84, Cys-155-Cys-414, Cys-189-Cys-227, Cys-193-Cys-226, Cys-247-Cys-273, Cys-255-Cys-260, and Cys-278-Cys-348. N-linked (GlcNAc...) asparagine glycans are attached at residues Asn-62 and Asn-81. Glu-229 (nucleophile) is an active-site residue. The active-site Proton donor is Glu-234. Asn-287 carries N-linked (GlcNAc...) asparagine glycosylation. 2 disordered regions span residues 401–427 and 444–481; these read NETSSTPGAVRGSCSTSSGVPAQLESN and GSTGNSSGGNPPGGNPPGTTTTRRPATSTGSSPGPTQT. A linker region spans residues 454 to 478; sequence PPGGNPPGTTTTRRPATSTGSSPGP. A compositionally biased stretch (low complexity) spans 460 to 479; it reads PGTTTTRRPATSTGSSPGPT. The 37-residue stretch at 478–514 folds into the CBM1 domain; it reads PTQTHYGQCGGIGYSGPTVCASGSTCQVLNPYYSQCL. Cystine bridges form between Cys-486–Cys-503 and Cys-497–Cys-513.

It belongs to the glycosyl hydrolase 7 (cellulase C) family.

The enzyme catalyses Hydrolysis of (1-&gt;4)-beta-D-glucosidic linkages in cellulose and cellotetraose, releasing cellobiose from the non-reducing ends of the chains.. Its function is as follows. The biological conversion of cellulose to glucose generally requires three types of hydrolytic enzymes: (1) Endoglucanases which cut internal beta-1,4-glucosidic bonds; (2) Exocellobiohydrolases that cut the disaccharide cellobiose from the non-reducing end of the cellulose polymer chain; (3) Beta-1,4-glucosidases which hydrolyze the cellobiose and other short cello-oligosaccharides to glucose. The polypeptide is Exoglucanase 1 (cbh1) (Hypocrea rufa (Trichoderma viride)).